Reading from the N-terminus, the 717-residue chain is Fatty acid oxidation complex subunit alpha (717 aa).

Positions 1 to 190 are enoyl-CoA hydratase/isomerase; sequence MIHAGNAITV…KDGAVDAVVA (190 aa). Aspartate 298 is a binding site for substrate. Residues 313–717 are 3-hydroxyacyl-CoA dehydrogenase; that stretch reads HPVNQAAVLG…MAANNKKFYG (405 aa). NAD(+)-binding positions include methionine 326, aspartate 345, 402–404, lysine 409, and serine 431; that span reads VTE. Catalysis depends on histidine 452, which acts as the For 3-hydroxyacyl-CoA dehydrogenase activity. Position 455 (asparagine 455) interacts with NAD(+). Asparagine 502 lines the substrate pocket.

The protein in the N-terminal section; belongs to the enoyl-CoA hydratase/isomerase family. In the C-terminal section; belongs to the 3-hydroxyacyl-CoA dehydrogenase family. In terms of assembly, heterotetramer of two alpha chains (FadB) and two beta chains (FadA).

The enzyme catalyses a (3S)-3-hydroxyacyl-CoA + NAD(+) = a 3-oxoacyl-CoA + NADH + H(+). It carries out the reaction a (3S)-3-hydroxyacyl-CoA = a (2E)-enoyl-CoA + H2O. The catalysed reaction is a 4-saturated-(3S)-3-hydroxyacyl-CoA = a (3E)-enoyl-CoA + H2O. It catalyses the reaction (3S)-3-hydroxybutanoyl-CoA = (3R)-3-hydroxybutanoyl-CoA. The enzyme catalyses a (3Z)-enoyl-CoA = a 4-saturated (2E)-enoyl-CoA. It carries out the reaction a (3E)-enoyl-CoA = a 4-saturated (2E)-enoyl-CoA. The protein operates within lipid metabolism; fatty acid beta-oxidation. Its function is as follows. Involved in the aerobic and anaerobic degradation of long-chain fatty acids via beta-oxidation cycle. Catalyzes the formation of 3-oxoacyl-CoA from enoyl-CoA via L-3-hydroxyacyl-CoA. It can also use D-3-hydroxyacyl-CoA and cis-3-enoyl-CoA as substrate. This is Fatty acid oxidation complex subunit alpha from Acinetobacter baumannii (strain ACICU).